The sequence spans 710 residues: DNA ligase (710 aa).

The disordered stretch occupies residues 1-26 (MPEDAIGQQVPPEQEAAGAEPTSAAR). NAD(+) is bound by residues 53–57 (DAEFD), 102–103 (SL), and Glu-132. Residue Lys-134 is the N6-AMP-lysine intermediate of the active site. Positions 155, 196, 312, and 336 each coordinate NAD(+). Zn(2+) contacts are provided by Cys-430, Cys-433, Cys-449, and Cys-455. One can recognise a BRCT domain in the interval 619 to 708 (EGPRPLEGMT…PDAAREVARV (90 aa)).

The protein belongs to the NAD-dependent DNA ligase family. LigA subfamily. Mg(2+) serves as cofactor. It depends on Mn(2+) as a cofactor.

The enzyme catalyses NAD(+) + (deoxyribonucleotide)n-3'-hydroxyl + 5'-phospho-(deoxyribonucleotide)m = (deoxyribonucleotide)n+m + AMP + beta-nicotinamide D-nucleotide.. DNA ligase that catalyzes the formation of phosphodiester linkages between 5'-phosphoryl and 3'-hydroxyl groups in double-stranded DNA using NAD as a coenzyme and as the energy source for the reaction. It is essential for DNA replication and repair of damaged DNA. This chain is DNA ligase, found in Salinispora arenicola (strain CNS-205).